We begin with the raw amino-acid sequence, 560 residues long: Involucrin (560 aa).

The span at 1-15 (MSQQHTLPVTLSPAL) shows a compositional bias: polar residues. Disordered stretches follow at residues 1 to 131 (MSQQ…KLLD), 150 to 359 (EQLL…LVQQ), and 404 to 534 (GQLK…QSAL). Over residues 76-91 (EQQQQEPQEQELQQQH) the composition is skewed to low complexity. 2 stretches are compositionally biased toward basic and acidic residues: residues 92-115 (WEQH…KAQR) and 159-172 (QEGH…REGQ). Low complexity predominate over residues 189-211 (QKGQLELPEQQEGQLELPEQQEG). Composition is skewed to basic and acidic residues over residues 212–231 (QLKH…HQEG), 252–264 (QLKH…KQPE), and 274–320 (KHLE…EHQE). A compositionally biased stretch (low complexity) spans 321–334 (GQLGLPEQQVQQLK). 5 stretches are compositionally biased toward basic and acidic residues: residues 335-353 (QLEK…EGQL), 404-420 (GQLK…KHLE), 454-463 (QLKHLEKQEA), 476-486 (KHLEQQEKQLE), and 494-510 (QLKH…DLEQ).

Belongs to the involucrin family. Directly or indirectly cross-linked to cornifelin (CNFN). Post-translationally, substrate of transglutaminase. Specific glutamines or lysines are cross-linked to keratins, desmoplakin and to inter involucrin molecules. As to expression, keratinocytes of epidermis and other stratified squamous epithelia.

It is found in the cytoplasm. In terms of biological role, part of the insoluble cornified cell envelope (CE) of stratified squamous epithelia. The sequence is that of Involucrin (IVL) from Pan paniscus (Pygmy chimpanzee).